A 320-amino-acid polypeptide reads, in one-letter code: Transaldolase (320 aa).

K135 acts as the Schiff-base intermediate with substrate in catalysis.

The protein belongs to the transaldolase family. Type 1 subfamily. As to quaternary structure, homodimer.

It is found in the cytoplasm. The enzyme catalyses D-sedoheptulose 7-phosphate + D-glyceraldehyde 3-phosphate = D-erythrose 4-phosphate + beta-D-fructose 6-phosphate. The protein operates within carbohydrate degradation; pentose phosphate pathway; D-glyceraldehyde 3-phosphate and beta-D-fructose 6-phosphate from D-ribose 5-phosphate and D-xylulose 5-phosphate (non-oxidative stage): step 2/3. In terms of biological role, transaldolase is important for the balance of metabolites in the pentose-phosphate pathway. In Colwellia psychrerythraea (strain 34H / ATCC BAA-681) (Vibrio psychroerythus), this protein is Transaldolase.